The following is a 366-amino-acid chain: Probable cyclin-dependent kinase 10 (366 aa).

The Protein kinase domain maps to 7-293 (FEKLDSIGEG…ASDAIKHPFF (287 aa)). ATP-binding positions include 13 to 21 (IGEGTYGIV) and Lys36. The active-site Proton acceptor is the Asp132. The segment covering 315 to 358 (FKNQNKKQNNNFNNFVQNNQTNQNNQTNQNNQTNQNNKTSQNNN) has biased composition (low complexity). The interval 315 to 366 (FKNQNKKQNNNFNNFVQNNQTNQNNQTNQNNQTNQNNKTSQNNNMDSYKYSK) is disordered.

Belongs to the protein kinase superfamily. CMGC Ser/Thr protein kinase family. CDC2/CDKX subfamily.

It catalyses the reaction L-seryl-[protein] + ATP = O-phospho-L-seryl-[protein] + ADP + H(+). It carries out the reaction L-threonyl-[protein] + ATP = O-phospho-L-threonyl-[protein] + ADP + H(+). This is Probable cyclin-dependent kinase 10 (cdk10) from Dictyostelium discoideum (Social amoeba).